Consider the following 315-residue polypeptide: Methionyl-tRNA formyltransferase (315 aa).

Residue 113–116 (SLLP) coordinates (6S)-5,6,7,8-tetrahydrofolate.

This sequence belongs to the Fmt family.

The enzyme catalyses L-methionyl-tRNA(fMet) + (6R)-10-formyltetrahydrofolate = N-formyl-L-methionyl-tRNA(fMet) + (6S)-5,6,7,8-tetrahydrofolate + H(+). Functionally, attaches a formyl group to the free amino group of methionyl-tRNA(fMet). The formyl group appears to play a dual role in the initiator identity of N-formylmethionyl-tRNA by promoting its recognition by IF2 and preventing the misappropriation of this tRNA by the elongation apparatus. The chain is Methionyl-tRNA formyltransferase from Shigella boydii serotype 4 (strain Sb227).